The primary structure comprises 137 residues: Putative transcriptional regulatory protein MJ0173 (137 aa).

This sequence belongs to the Tfx family.

In terms of biological role, putative transcriptional regulator. This Methanocaldococcus jannaschii (strain ATCC 43067 / DSM 2661 / JAL-1 / JCM 10045 / NBRC 100440) (Methanococcus jannaschii) protein is Putative transcriptional regulatory protein MJ0173.